A 551-amino-acid polypeptide reads, in one-letter code: Enhancer of mRNA-decapping protein 3 (551 aa).

Residues 1 to 63 (MSQFVGFGVQ…LKDLKVLTVA (63 aa)) enclose the Sm domain. A disordered region spans residues 64-92 (SQSGKRKQQRQQQQQNDYNQNRGEHIDWQ). The DFDF domain maps to 93-129 (DDDVSKIKQQEDFDFQRNLGMFNKKDVFAQLKQNDDI). Serine 257 and serine 261 each carry phosphoserine. The YjeF N-terminal domain occupies 288–527 (VQLLEMESIT…DIGIPQGAYS (240 aa)).

This sequence belongs to the EDC3 family. As to quaternary structure, homodimer. Interacts with DCP2.

It localises to the cytoplasm. The protein localises to the P-body. Its function is as follows. Stimulates decapping of both stable and unstable mRNA during mRNA decay. Does not affect nonsense-mediated mRNA decay. Required for normal P-body assembly. In Saccharomyces cerevisiae (strain ATCC 204508 / S288c) (Baker's yeast), this protein is Enhancer of mRNA-decapping protein 3 (EDC3).